A 206-amino-acid chain; its full sequence is NADH-quinone oxidoreductase subunit C (206 aa).

This sequence belongs to the complex I 30 kDa subunit family. As to quaternary structure, NDH-1 is composed of 14 different subunits. Subunits NuoB, C, D, E, F, and G constitute the peripheral sector of the complex.

It localises to the cell inner membrane. The enzyme catalyses a quinone + NADH + 5 H(+)(in) = a quinol + NAD(+) + 4 H(+)(out). NDH-1 shuttles electrons from NADH, via FMN and iron-sulfur (Fe-S) centers, to quinones in the respiratory chain. The immediate electron acceptor for the enzyme in this species is believed to be ubiquinone. Couples the redox reaction to proton translocation (for every two electrons transferred, four hydrogen ions are translocated across the cytoplasmic membrane), and thus conserves the redox energy in a proton gradient. In Bordetella avium (strain 197N), this protein is NADH-quinone oxidoreductase subunit C.